We begin with the raw amino-acid sequence, 326 residues long: Iron-sulfur cluster assembly SufBD family protein PH0883 (326 aa).

This sequence belongs to the iron-sulfur cluster assembly SufBD family.

The polypeptide is Iron-sulfur cluster assembly SufBD family protein PH0883 (Pyrococcus horikoshii (strain ATCC 700860 / DSM 12428 / JCM 9974 / NBRC 100139 / OT-3)).